A 658-amino-acid polypeptide reads, in one-letter code: Glycogen debranching enzyme (658 aa).

D336 serves as the catalytic Nucleophile. Residue E371 is the Proton donor of the active site. The segment at 459 to 484 (EANGEENRDGTNSNYSDNHGKEGLGG) is disordered.

This sequence belongs to the glycosyl hydrolase 13 family.

The catalysed reaction is Hydrolysis of (1-&gt;6)-alpha-D-glucosidic linkages to branches with degrees of polymerization of three or four glucose residues in limit dextrin.. It participates in glycan degradation; glycogen degradation. Functionally, removes maltotriose and maltotetraose chains that are attached by 1,6-alpha-linkage to the limit dextrin main chain, generating a debranched limit dextrin. This Salmonella paratyphi A (strain ATCC 9150 / SARB42) protein is Glycogen debranching enzyme.